A 150-amino-acid chain; its full sequence is Large ribosomal subunit protein uL15 (150 aa).

The segment at 1-57 is disordered; it reads MRLEDIRPQAGSTRRRRRLGRGVSAGQGASCGKGMRGQKARKGGSTRPGFEGGQTPL. Positions 23 to 35 are enriched in gly residues; that stretch reads VSAGQGASCGKGM.

It belongs to the universal ribosomal protein uL15 family. Part of the 50S ribosomal subunit.

Its function is as follows. Binds to the 23S rRNA. This chain is Large ribosomal subunit protein uL15, found in Synechococcus sp. (strain JA-2-3B'a(2-13)) (Cyanobacteria bacterium Yellowstone B-Prime).